Reading from the N-terminus, the 216-residue chain is MLDREGFRPNVGIILLNARNEVFWGKRLREHSWQFPQGGIKYGETPMQAMYRELHEETGLHPEHVKIIGRTRDWLRYEVPDKFIKREVRGHYRGQKQIWFLLRMVGRDCDICLRATDHPEFDAWRWNEYWVPLDAVIEFKRDVYQLALTELSRFLRRPAQRADKPQGPRPSSRYPRVIGTQSQQTLTIVDTSVVCSEIEVEASTLDEMPPRVIVGK.

Residues 6-149 (GFRPNVGIIL…KRDVYQLALT (144 aa)) form the Nudix hydrolase domain. Residues 38 to 59 (GGIKYGETPMQAMYRELHEETG) carry the Nudix box motif.

This sequence belongs to the Nudix hydrolase family. RppH subfamily. A divalent metal cation serves as cofactor.

Its function is as follows. Accelerates the degradation of transcripts by removing pyrophosphate from the 5'-end of triphosphorylated RNA, leading to a more labile monophosphorylated state that can stimulate subsequent ribonuclease cleavage. In Burkholderia ambifaria (strain MC40-6), this protein is RNA pyrophosphohydrolase.